A 397-amino-acid chain; its full sequence is LIM/homeobox protein Lhx9 (397 aa).

2 LIM zinc-binding domains span residues 69 to 130 (ALCA…RFSV) and 131 to 193 (QRCA…LLQG). 3 disordered regions span residues 248-272 (ENEA…RMRT), 330-365 (ENGG…LTDL), and 378-397 (SNMD…TNLF). A DNA-binding region (homeobox) is located at residues 267-326 (TKRMRTSFKHHQLRTMKSYFAINHNPDAKDLKQLAQKTGLTKRVLQVWFQNARAKFRRNL). Low complexity predominate over residues 353–365 (LTPPGTATTLTDL). Residues 387–397 (SPSQTTLTNLF) show a composition bias toward polar residues.

In terms of assembly, interacts with LDB1 and LDB2. As to expression, expressed in the dorsal thalamus and inner nuclei of the cerebellum.

It is found in the nucleus. Its function is as follows. Involved in gonadal development. In Mus musculus (Mouse), this protein is LIM/homeobox protein Lhx9 (Lhx9).